A 313-amino-acid chain; its full sequence is Tyrosine recombinase XerC (313 aa).

A Core-binding (CB) domain is found at 11–97 (NSLQKPLERF…SLRSFFDFLI (87 aa)). A Tyr recombinase domain is found at 118 to 298 (PLPKNLDVDE…DFQHLAQAYD (181 aa)). Catalysis depends on residues arginine 157, lysine 181, histidine 250, arginine 253, and histidine 276. Tyrosine 285 serves as the catalytic O-(3'-phospho-DNA)-tyrosine intermediate.

This sequence belongs to the 'phage' integrase family. XerC subfamily. As to quaternary structure, forms a cyclic heterotetrameric complex composed of two molecules of XerC and two molecules of XerD.

It is found in the cytoplasm. Site-specific tyrosine recombinase, which acts by catalyzing the cutting and rejoining of the recombining DNA molecules. The XerC-XerD complex is essential to convert dimers of the bacterial chromosome into monomers to permit their segregation at cell division. It also contributes to the segregational stability of plasmids. In Vibrio campbellii (strain ATCC BAA-1116), this protein is Tyrosine recombinase XerC.